Reading from the N-terminus, the 293-residue chain is Ribonuclease HIII (293 aa).

The region spanning 78-293 (LPLIGTDEVG…TEKAKKRLER (216 aa)) is the RNase H type-2 domain. A divalent metal cation is bound by residues Asp84, Glu85, and Asp187.

Belongs to the RNase HII family. RnhC subfamily. Mn(2+) serves as cofactor. The cofactor is Mg(2+).

The protein localises to the cytoplasm. It catalyses the reaction Endonucleolytic cleavage to 5'-phosphomonoester.. Functionally, endonuclease that specifically degrades the RNA of RNA-DNA hybrids. This Streptococcus pneumoniae (strain 70585) protein is Ribonuclease HIII.